The sequence spans 188 residues: Large ribosomal subunit protein eL18 (188 aa).

Residues 143–188 (RSAREAEKHFGPAPGVPHSHTKPHVRSKGRKFERARGRRASRAYKN) form a disordered region. Composition is skewed to basic residues over residues 161 to 171 (SHTKPHVRSKG) and 178 to 188 (RGRRASRAYKN).

It belongs to the eukaryotic ribosomal protein eL18 family.

It localises to the cytoplasm. The sequence is that of Large ribosomal subunit protein eL18 (rpl-18) from Caenorhabditis briggsae.